Reading from the N-terminus, the 264-residue chain is Thymidylate synthase (264 aa).

Arg-21 provides a ligand contact to dUMP. His-51 serves as a coordination point for (6R)-5,10-methylene-5,6,7,8-tetrahydrofolate. A dUMP-binding site is contributed by 126-127; the sequence is RR. Catalysis depends on Cys-146, which acts as the Nucleophile. Residues 166-169, Asn-177, and 207-209 each bind dUMP; these read RSCD and HLY. Asp-169 contacts (6R)-5,10-methylene-5,6,7,8-tetrahydrofolate. Position 263 (Ala-263) interacts with (6R)-5,10-methylene-5,6,7,8-tetrahydrofolate.

This sequence belongs to the thymidylate synthase family. Bacterial-type ThyA subfamily. Homodimer.

It is found in the cytoplasm. It carries out the reaction dUMP + (6R)-5,10-methylene-5,6,7,8-tetrahydrofolate = 7,8-dihydrofolate + dTMP. It functions in the pathway pyrimidine metabolism; dTTP biosynthesis. Functionally, catalyzes the reductive methylation of 2'-deoxyuridine-5'-monophosphate (dUMP) to 2'-deoxythymidine-5'-monophosphate (dTMP) while utilizing 5,10-methylenetetrahydrofolate (mTHF) as the methyl donor and reductant in the reaction, yielding dihydrofolate (DHF) as a by-product. This enzymatic reaction provides an intracellular de novo source of dTMP, an essential precursor for DNA biosynthesis. The sequence is that of Thymidylate synthase from Shewanella oneidensis (strain ATCC 700550 / JCM 31522 / CIP 106686 / LMG 19005 / NCIMB 14063 / MR-1).